We begin with the raw amino-acid sequence, 419 residues long: POU domain, class 4, transcription factor 1 (419 aa).

The short motif at 57 to 66 (RAEALAAVDI) is the POU-IV box element. Disordered regions lie at residues 94 to 117 (STVP…GDLL) and 131 to 197 (AGGA…HSLG). A compositionally biased stretch (basic residues) spans 99 to 108 (AHHHHHHHHH). Residues 131–184 (AGGAGAAAGGGGAHDGPGGGGGPGGGGGPGGGPGGGGGGGPGGGGGGPGGGLLG) are compositionally biased toward gly residues. A POU-specific domain is found at 261–338 (SDTDPRELEA…LQAWLEEAEG (78 aa)). The segment at residues 356 to 415 (KRKRTSIAAPEKRSLEAYFAVQPRPSSEKIAAIAEKLDLKKNVVRVWFCNQRQKQKRMKF) is a DNA-binding region (homeobox).

The protein belongs to the POU transcription factor family. Class-4 subfamily. In terms of assembly, interacts (via N-terminus) with RIT2; the interaction controls POU4F1 transactivation activity on some neuronal target genes. Isoform 1 interacts with POU4F2; this interaction inhibits both POU4F1 DNA-binding and transcriptional activities. Isoform 1 interacts (C-terminus) with ESR1 (via DNA-binding domain); this interaction decreases the estrogen receptor ESR1 transcriptional activity in a DNA- and ligand 17-beta-estradiol-independent manner. In terms of tissue distribution, expressed in the brain and the retina. Present in the developing brain, spinal cord and eye.

It localises to the nucleus. The protein resides in the cytoplasm. Multifunctional transcription factor with different regions mediating its different effects. Acts by binding (via its C-terminal domain) to sequences related to the consensus octamer motif 5'-ATGCAAAT-3' in the regulatory regions of its target genes. Regulates the expression of specific genes involved in differentiation and survival within a subset of neuronal lineages. It has been shown that activation of some of these genes requires its N-terminal domain, maybe through a neuronal-specific cofactor. Activates BCL2 expression and protects neuronal cells from apoptosis (via the N-terminal domain). Induces neuronal process outgrowth and the coordinate expression of genes encoding synaptic proteins. Exerts its major developmental effects in somatosensory neurons and in brainstem nuclei involved in motor control. Stimulates the binding affinity of the nuclear estrogene receptor ESR1 to DNA estrogen response element (ERE), and hence modulates ESR1-induced transcriptional activity. May positively regulate POU4F2 and POU4F3. Regulates dorsal root ganglion sensory neuron specification and axonal projection into the spinal cord. Plays a role in TNFSF11-mediated terminal osteoclast differentiation. Negatively regulates its own expression interacting directly with a highly conserved autoregulatory domain surrounding the transcription initiation site. Functionally, able to act as transcription factor, cannot regulate the expression of the same subset of genes than isoform 1. Does not have antiapoptotic effect on neuronal cells. In Homo sapiens (Human), this protein is POU domain, class 4, transcription factor 1.